Consider the following 312-residue polypeptide: Olfactory receptor 6C74 (312 aa).

The Extracellular segment spans residues 1-23 (MRNHTTVANFILLGLTDDPQLQV). Residue Asn3 is glycosylated (N-linked (GlcNAc...) asparagine). A helical membrane pass occupies residues 24–44 (IIFLLLFFTYMLSITGNLTII). The Cytoplasmic portion of the chain corresponds to 45 to 63 (TLTLLDLHLKTPMYFFLRN). Residues 64–84 (FSFLEVSFTTVYIPKFLVSMA) traverse the membrane as a helical segment. Residues 85–95 (TGDKTISYNDC) are Extracellular-facing. Cys95 and Cys177 are disulfide-bonded. The chain crosses the membrane as a helical span at residues 96–116 (AAQLFFTILLGATEFFLLAAM). The Cytoplasmic portion of the chain corresponds to 117–140 (SYERYVAICKPLHYTTIMSSRVCS). The helical transmembrane segment at 141–161 (LLVFASWMAGFLIIFPPLLMG) threads the bilayer. Residues 162 to 194 (LQLDFCAANTVDHFFCDVSPILQLSCTDTDIIE) are Extracellular-facing. A helical transmembrane segment spans residues 195-215 (LMMLLSAILTLLVTLVLVILS). Topologically, residues 216–237 (YTNIIRTILKIPSSQQRKKAFS) are cytoplasmic. A helical transmembrane segment spans residues 238-258 (TCSSHMVVVSISYGSCIFMYV). Residues 259 to 269 (KPSAKERVSLN) lie on the Extracellular side of the membrane. A helical membrane pass occupies residues 270 to 290 (KGIALLSTSVAPMLNPFIYTL). At 291 to 312 (RNKQVKDVFKHTVKKIELFSMK) the chain is on the cytoplasmic side.

It belongs to the G-protein coupled receptor 1 family.

The protein resides in the cell membrane. Its function is as follows. Odorant receptor. The protein is Olfactory receptor 6C74 (OR6C74) of Homo sapiens (Human).